The chain runs to 404 residues: Cysteine desulfurase IscS (404 aa).

Pyridoxal 5'-phosphate is bound by residues 75–76 (AT), asparagine 155, glutamine 183, and 203–205 (SAH). The residue at position 206 (lysine 206) is an N6-(pyridoxal phosphate)lysine. Threonine 243 is a pyridoxal 5'-phosphate binding site. The active-site Cysteine persulfide intermediate is the cysteine 328. Position 328 (cysteine 328) interacts with [2Fe-2S] cluster.

Belongs to the class-V pyridoxal-phosphate-dependent aminotransferase family. NifS/IscS subfamily. Homodimer. Forms a heterotetramer with IscU, interacts with other sulfur acceptors. The cofactor is pyridoxal 5'-phosphate.

Its subcellular location is the cytoplasm. It catalyses the reaction (sulfur carrier)-H + L-cysteine = (sulfur carrier)-SH + L-alanine. The protein operates within cofactor biosynthesis; iron-sulfur cluster biosynthesis. Master enzyme that delivers sulfur to a number of partners involved in Fe-S cluster assembly, tRNA modification or cofactor biosynthesis. Catalyzes the removal of elemental sulfur atoms from cysteine to produce alanine. Functions as a sulfur delivery protein for Fe-S cluster synthesis onto IscU, an Fe-S scaffold assembly protein, as well as other S acceptor proteins. The chain is Cysteine desulfurase IscS from Vibrio cholerae serotype O1 (strain ATCC 39541 / Classical Ogawa 395 / O395).